A 426-amino-acid chain; its full sequence is Divalent metal cation transporter MntH (426 aa).

A run of 10 helical transmembrane segments spans residues 31 to 51 (WYLL…GNVA), 58 to 78 (AQFG…AGLV), 134 to 156 (ILFR…LLLM), 169 to 189 (VITG…FVAT), 208 to 228 (SVLL…VYLH), 256 to 276 (VILA…VAAI), 298 to 318 (LGAT…LASA), 337 to 357 (IPML…LALG), 363 to 383 (ALVL…LPLV), and 402 to 422 (TVLG…LIYL).

The protein belongs to the NRAMP family.

The protein localises to the cell membrane. In terms of biological role, h(+)-stimulated, divalent metal cation uptake system. The protein is Divalent metal cation transporter MntH of Mycobacterium leprae (strain TN).